The following is a 470-amino-acid chain: Bifunctional protein ArgHA (470 aa).

The argininosuccinate lyase stretch occupies residues 1 to 470 (MALWGGRFSQ…TSGISIRAAR (470 aa)).

This sequence in the N-terminal section; belongs to the lyase 1 family. Argininosuccinate lyase subfamily. In the C-terminal section; belongs to the acetyltransferase family. ArgA subfamily.

The protein resides in the cytoplasm. It catalyses the reaction 2-(N(omega)-L-arginino)succinate = fumarate + L-arginine. The enzyme catalyses L-glutamate + acetyl-CoA = N-acetyl-L-glutamate + CoA + H(+). Its pathway is amino-acid biosynthesis; L-arginine biosynthesis; N(2)-acetyl-L-ornithine from L-glutamate: step 1/4. It participates in amino-acid biosynthesis; L-arginine biosynthesis; L-arginine from L-ornithine and carbamoyl phosphate: step 3/3. The protein is Bifunctional protein ArgHA (argHA) of Moritella profunda.